A 220-amino-acid chain; its full sequence is LHFPL tetraspan subfamily member 1 protein (220 aa).

The first 20 residues, 1–20 (MRNSLTMVGTFWAFLSLVTA), serve as a signal peptide directing secretion. The next 2 membrane-spanning stretches (helical) occupy residues 86 to 106 (VVTG…VLGC) and 122 to 142 (AAQF…PLGW). Asn-153 carries an N-linked (GlcNAc...) asparagine glycan. A helical transmembrane segment spans residues 165–185 (LGWAYYCAGGGAAAAMLICTW).

It belongs to the LHFP family. As to expression, widely expressed. Strongly expressed in vagina and ovary. Weakly expressed in spleen, kidney, thymus, testis, brain, lung, intestine and uterus.

The protein localises to the membrane. This is LHFPL tetraspan subfamily member 1 protein from Mus musculus (Mouse).